The chain runs to 159 residues: Prs ADP-ribosylating antitoxin (159 aa).

Residues E99 to A159 are sufficient to neutralize toxin.

The protein belongs to the MbcA/ParS/Xre antitoxin family. In terms of assembly, forms heterotetrameric ParS(2)-ParT(2) complexes. The 2 antitoxin fragments do not make contact in the crystal structure.

In terms of biological role, antitoxin component of a type II toxin-antitoxin (TA) system. Neutralizes the bacteriostatic effect of cognate toxin ParT by inserting into its active site. The sequence is that of Prs ADP-ribosylating antitoxin from Sphingobium sp. (strain YBL2).